A 200-amino-acid chain; its full sequence is dITP/XTP pyrophosphatase (200 aa).

Residue threonine 7–lysine 12 coordinates substrate. Glutamate 38 and aspartate 73 together coordinate Mg(2+). The Proton acceptor role is filled by aspartate 73. Substrate is bound by residues serine 74, phenylalanine 154–aspartate 157, lysine 177, and histidine 182–arginine 183.

It belongs to the HAM1 NTPase family. Homodimer. Mg(2+) is required as a cofactor.

The enzyme catalyses XTP + H2O = XMP + diphosphate + H(+). It catalyses the reaction dITP + H2O = dIMP + diphosphate + H(+). The catalysed reaction is ITP + H2O = IMP + diphosphate + H(+). Its function is as follows. Pyrophosphatase that catalyzes the hydrolysis of nucleoside triphosphates to their monophosphate derivatives, with a high preference for the non-canonical purine nucleotides XTP (xanthosine triphosphate), dITP (deoxyinosine triphosphate) and ITP. Seems to function as a house-cleaning enzyme that removes non-canonical purine nucleotides from the nucleotide pool, thus preventing their incorporation into DNA/RNA and avoiding chromosomal lesions. The sequence is that of dITP/XTP pyrophosphatase from Campylobacter jejuni subsp. jejuni serotype O:6 (strain 81116 / NCTC 11828).